The chain runs to 262 residues: Transmembrane protein 106A (262 aa).

Residues 95 to 115 traverse the membrane as a helical segment; the sequence is FVFLAVLICLVTSSFIVFFLF.

The protein belongs to the TMEM106 family. As to expression, expressed in renal cells (at protein level). Expressed in epithelial cells.

It localises to the cell membrane. Activates macrophages and polarizes them into M1-like macrophages through the activation of the MAPK and NF-kappaB signaling pathway. Upon activation, up-regulates the expression of CD80, CD86, CD69 and MHC II on macrophages, and induces the release of pro-inflammatory cytokines such as TNF, IL1B, IL6, CCL2 and nitric oxide. May play a role in inhibition of proliferation and migration. In Homo sapiens (Human), this protein is Transmembrane protein 106A (TMEM106A).